The primary structure comprises 538 residues: Chaperonin GroEL (538 aa).

Residues 29 to 32 (TIGP), 86 to 90 (DGTTT), Gly-413, 476 to 478 (NAA), and Asp-492 contribute to the ATP site.

It belongs to the chaperonin (HSP60) family. As to quaternary structure, forms a cylinder of 14 subunits composed of two heptameric rings stacked back-to-back. Interacts with the co-chaperonin GroES.

The protein localises to the cytoplasm. It catalyses the reaction ATP + H2O + a folded polypeptide = ADP + phosphate + an unfolded polypeptide.. Its function is as follows. Together with its co-chaperonin GroES, plays an essential role in assisting protein folding. The GroEL-GroES system forms a nano-cage that allows encapsulation of the non-native substrate proteins and provides a physical environment optimized to promote and accelerate protein folding. This chain is Chaperonin GroEL, found in Staphylococcus aureus (strain MRSA252).